The chain runs to 115 residues: uncharacterized protein (115 aa).

This is an uncharacterized protein from Caenorhabditis elegans.